The chain runs to 426 residues: 6-Hydroxy-7-prenyldeoxybrevianamide E synthase notC' (426 aa).

Glu94 lines the substrate pocket. Dimethylallyl diphosphate contacts are provided by Arg105, Lys191, and Tyr193. Position 195 (Tyr195) interacts with substrate. Dimethylallyl diphosphate is bound by residues Lys267, Tyr269, Gln352, Tyr354, Tyr418, and Tyr422.

Belongs to the tryptophan dimethylallyltransferase family.

It catalyses the reaction 6-hydroxydeoxybrevianamide E + dimethylallyl diphosphate = notoamide S + diphosphate. It participates in alkaloid biosynthesis. Functionally, prenyltransferase; part of the gene cluster that mediates the biosynthesis of notoamide, a fungal indole alkaloid that belongs to a family of natural products containing a characteristic bicyclo[2.2.2]diazaoctane core. The first step of notoamide biosynthesis involves coupling of L-proline and L-tryptophan by the bimodular NRPS notE', to produce cyclo-L-tryptophan-L-proline called brevianamide F. The reverse prenyltransferase notF' then acts as a deoxybrevianamide E synthase and converts brevianamide F to deoxybrevianamide E via reverse prenylation at C-2 of the indole ring leading to the bicyclo[2.2.2]diazaoctane core. Deoxybrevianamide E is further hydroxylated at C-6 of the indole ring, likely catalyzed by the cytochrome P450 monooxygenase notG', to yield 6-hydroxy-deoxybrevianamide E. 6-hydroxy-deoxybrevianamide E is a specific substrate of the prenyltransferase notC' for normal prenylation at C-7 to produce 6-hydroxy-7-prenyl-deoxybrevianamide, also called notoamide S. As the proposed pivotal branching point in notoamide biosynthesis, notoamide S can be diverted to notoamide E through an oxidative pyran ring closure putatively catalyzed by either notH' cytochrome P450 monooxygenase or the notD' FAD-linked oxidoreductase. This step would be followed by an indole 2,3-epoxidation-initiated pinacol-like rearrangement catalyzed by the notB' FAD-dependent monooxygenase leading to the formation of notoamide C and notoamide D. On the other hand notoamide S is converted to notoamide T by notH' (or notD'), a bifunctional oxidase that also functions as the intramolecular Diels-Alderase responsible for generation of (-)-notoamide T. To generate antipodal (+)-notoaminide T, notH (or notD) in Aspergillus strain MF297-2 is expected to catalyze a Diels-Alder reaction leading to the opposite stereochemistry. The remaining oxidoreductase notD' (or notH') likely catalyzes the oxidative pyran ring formation to yield (-)-stephacidin A. The FAD-dependent monooxygenase notI' is highly similar to notB' and is predicted to catalyze a similar conversion from (-)-stephacidin A to (+)-notoamide B via the 2,3-epoxidation of (-)-stephacidin A followed by a pinacol-type rearrangement. Finally, it remains unclear which enzyme could be responsible for the final hydroxylation steps leading to notoamide A and sclerotiamide. This is 6-Hydroxy-7-prenyldeoxybrevianamide E synthase notC' from Aspergillus versicolor.